The sequence spans 313 residues: Porphobilinogen deaminase (313 aa).

At Cys241 the chain carries S-(dipyrrolylmethanemethyl)cysteine.

The protein belongs to the HMBS family. In terms of assembly, monomer. Dipyrromethane is required as a cofactor.

It catalyses the reaction 4 porphobilinogen + H2O = hydroxymethylbilane + 4 NH4(+). The protein operates within porphyrin-containing compound metabolism; protoporphyrin-IX biosynthesis; coproporphyrinogen-III from 5-aminolevulinate: step 2/4. It participates in porphyrin-containing compound metabolism; chlorophyll biosynthesis. In terms of biological role, tetrapolymerization of the monopyrrole PBG into the hydroxymethylbilane pre-uroporphyrinogen in several discrete steps. In Chlorobium luteolum (strain DSM 273 / BCRC 81028 / 2530) (Pelodictyon luteolum), this protein is Porphobilinogen deaminase.